Here is a 143-residue protein sequence, read N- to C-terminus: Crossover junction endodeoxyribonuclease Hjc (143 aa).

Residue Glu11 coordinates Mg(2+). Ser31 is an active-site residue. Mg(2+)-binding residues include Asp41 and Glu54.

Belongs to the Holliday junction resolvase Hjc family. As to quaternary structure, homodimer. The cofactor is Mg(2+).

The catalysed reaction is Endonucleolytic cleavage at a junction such as a reciprocal single-stranded crossover between two homologous DNA duplexes (Holliday junction).. In terms of biological role, a structure-specific endonuclease that resolves Holliday junction (HJ) intermediates during genetic recombination. Cleaves 4-way DNA junctions introducing paired nicks in opposing strands, leaving a 5'-terminal phosphate and a 3'-terminal hydroxyl group that are ligated to produce recombinant products. Its function is as follows. Redundant function with Holliday junction resolvase Hje. This is Crossover junction endodeoxyribonuclease Hjc from Sulfolobus acidocaldarius (strain ATCC 33909 / DSM 639 / JCM 8929 / NBRC 15157 / NCIMB 11770).